Here is a 541-residue protein sequence, read N- to C-terminus: Zingiberene synthase (541 aa).

5 residues coordinate Mg(2+): Asp-295, Asp-299, Asn-439, Ser-443, and Glu-447. A DDXXD motif motif is present at residues 295–299 (DDIID).

This sequence belongs to the terpene synthase family. Mg(2+) serves as cofactor. Requires Mn(2+) as cofactor.

It localises to the cytoplasm. It carries out the reaction (2E,6E)-farnesyl diphosphate = alpha-zingiberene + diphosphate. The protein operates within secondary metabolite biosynthesis; terpenoid biosynthesis. In terms of biological role, sesquiterpene synthase converting farnesyl diphosphate into two major products, zingiberene &gt; beta-sesquiphellandrene, and five minor products, 7-epi-sesquithujene, sesquisabinene A, (E)-alpha-bergamotene, (E)-beta-farnesene and beta-bisabolene. Can also accept geranyl diphosphate as substrate, producing nine monoterpenes, with myrcene, limonene and alpha-terpinolene as the major products. The polypeptide is Zingiberene synthase (TPS1) (Sorghum bicolor (Sorghum)).